Reading from the N-terminus, the 338-residue chain is Bifunctional methylenetetrahydrofolate dehydrogenase/cyclohydrolase 2, mitochondrial (338 aa).

Substrate contacts are provided by residues 89 to 93 (YVRNK) and 136 to 138 (VQL). NAD(+) contacts are provided by residues 205–207 (GRS) and R238. A substrate-binding site is contributed by 314-318 (PGGVG).

Belongs to the tetrahydrofolate dehydrogenase/cyclohydrolase family. Requires Mg(2+) as cofactor. In terms of tissue distribution, widely expressed.

Its subcellular location is the mitochondrion inner membrane. The catalysed reaction is (6R)-5,10-methylene-5,6,7,8-tetrahydrofolate + NAD(+) = (6R)-5,10-methenyltetrahydrofolate + NADH. The enzyme catalyses (6R)-5,10-methenyltetrahydrofolate + H2O = (6R)-10-formyltetrahydrofolate + H(+). It catalyses the reaction (6R)-5,10-methylene-5,6,7,8-tetrahydrofolate + NADP(+) = (6R)-5,10-methenyltetrahydrofolate + NADPH. Its pathway is one-carbon metabolism; tetrahydrofolate interconversion. Its function is as follows. Bifunctional mitochondrial folate-interconverting enzyme that has both NAD/NADP-dependent methylenetetrahydrofolate dehydrogenase and methenyltetrahydrofolate cyclohydrolase activities. This Mus musculus (Mouse) protein is Bifunctional methylenetetrahydrofolate dehydrogenase/cyclohydrolase 2, mitochondrial.